Consider the following 174-residue polypeptide: 2-C-methyl-D-erythritol 2,4-cyclodiphosphate synthase (174 aa).

Residues D13, H15, and H61 each coordinate a divalent metal cation. Position 13–15 (13–15) interacts with 4-CDP-2-C-methyl-D-erythritol 2-phosphate; the sequence is DAH. 4-CDP-2-C-methyl-D-erythritol 2-phosphate-binding positions include 75–77, 149–152, F156, and R159; these read DIG and TTTD.

This sequence belongs to the IspF family. As to quaternary structure, homotrimer. A divalent metal cation serves as cofactor.

It catalyses the reaction 4-CDP-2-C-methyl-D-erythritol 2-phosphate = 2-C-methyl-D-erythritol 2,4-cyclic diphosphate + CMP. It participates in isoprenoid biosynthesis; isopentenyl diphosphate biosynthesis via DXP pathway; isopentenyl diphosphate from 1-deoxy-D-xylulose 5-phosphate: step 4/6. Involved in the biosynthesis of isopentenyl diphosphate (IPP) and dimethylallyl diphosphate (DMAPP), two major building blocks of isoprenoid compounds. Catalyzes the conversion of 4-diphosphocytidyl-2-C-methyl-D-erythritol 2-phosphate (CDP-ME2P) to 2-C-methyl-D-erythritol 2,4-cyclodiphosphate (ME-CPP) with a corresponding release of cytidine 5-monophosphate (CMP). The chain is 2-C-methyl-D-erythritol 2,4-cyclodiphosphate synthase from Bifidobacterium longum subsp. infantis (strain ATCC 15697 / DSM 20088 / JCM 1222 / NCTC 11817 / S12).